The chain runs to 520 residues: Aspartate-proton symporter (520 aa).

The next 14 membrane-spanning stretches (helical) occupy residues 13-33 (LFDLILIGMGAIFGSAWLFAV), 49-69 (ILGGAIILLIGLVYAELGAAL), 85-105 (HLVGYLISFVTIVAYTSLISI), 130-150 (TISGWILQFALLCLFFLLNYW), 161-181 (IISIFKYIVPITIIIVLIFHF), 201-221 (AAISTGGVMFAYLGLHPIVSV), 232-252 (IPIALIICIIVSTIIYTVLQV), 281-301 (IAVMLGLGWLATLVILDAILS), 345-365 (WLSFALSIFWTLPFPSWNALV), 366-386 (NVCSVALILSYAIAPISSAAL), 402-422 (MSIIGPLSFIFTAFIVYWSGW), 425-445 (VSWLLGSQLVMFLIYLCFSKY), 460-480 (AWWLIGFYIMMLIFSYIGSFG), and 482-502 (GLGIISNPVDLILVAIGSLAI).

It belongs to the amino acid-polyamine-organocation (APC) superfamily. AGT (TC 2.A.3.11) family.

The protein resides in the cell membrane. In terms of biological role, uptake of L-aspartate with the concomitant import of a proton. Can also transport aspartate hydroxamate and L-glutamate with lower affinity and efficiency. The chain is Aspartate-proton symporter (yveA) from Bacillus subtilis (strain 168).